The following is a 146-amino-acid chain: Transcriptional regulator MraZ (146 aa).

SpoVT-AbrB domains follow at residues 5 to 52 and 81 to 124; these read SAAL…PRAE and AAEI…KEES.

Belongs to the MraZ family. Forms oligomers.

The protein localises to the cytoplasm. It is found in the nucleoid. The sequence is that of Transcriptional regulator MraZ from Alcanivorax borkumensis (strain ATCC 700651 / DSM 11573 / NCIMB 13689 / SK2).